The sequence spans 546 residues: Carboxylic ester hydrolase FVEG_12634 (546 aa).

The disordered stretch occupies residues 72-91 (FTDGTKICPQPPSSNTPDPS). Ser214 (acyl-ester intermediate) is an active-site residue.

The protein belongs to the type-B carboxylesterase/lipase family.

It carries out the reaction a carboxylic ester + H2O = an alcohol + a carboxylate + H(+). Its function is as follows. Carboxylic ester hydrolase; part of the Fusarium detoxification of benzoxazolinone cluster 2 (FDB2) involved in the degradation of benzoxazolinones produced by the host plant. Maize, wheat, and rye produce the 2 benzoxazinone phytoanticipins 2,4-dihy-droxy-7-methoxy-1,4-benzoxazin-3-one (DIMBOA) and 2,4-dihydroxy-1,4-benzoxazin-3-one (DIBOA) that, due to their inherent instability once released, spontaneously degrade to the more stable corresponding benzoxazolinones, 6-methoxy-2-benzoxazolinone (MBOA) and 2-benzoxazolinone (BOA), respectively. The first step in the detoxification of benzoxazolinones involves the hydrolysis of the cyclic ester bond of benzoxazolinones by the FDB1 cluster gamma-lactamase MBL1 to aminophenols. MBL1 is able to convert BOA into 2-aminophenol (2-AP), as well as MBOA into 5-methoxy-2-aminophenol (2-AMP). The FDB2 cluster N-malonyltransferase FDB2/NAT1 then metabolizes aminophenols via N-malonylation to non-toxic malonamic acids. FDB2/NAT1 converts 2-AP into N-(2-hydroxyphenyl) malonamic acid (HPMA) and 2-AMP into N-(2-hydroxy-4-methoxyphenyl) malonamic acid (HMPMA). The duplicated dienlactone hydrolases DLH1 and DLH2 may provide redundant function for hydrolyzing the lactone moiety in the BOA molecule. The roles of the amidases an other enzymes encoded by the 2 FDB clusters have not been identified so far. The chain is Carboxylic ester hydrolase FVEG_12634 from Gibberella moniliformis (strain M3125 / FGSC 7600) (Maize ear and stalk rot fungus).